A 333-amino-acid polypeptide reads, in one-letter code: Ketol-acid reductoisomerase (NADP(+)) (333 aa).

A KARI N-terminal Rossmann domain is found at 2–182; sequence ANIYYDSDCD…GGGRAGILET (181 aa). Residues 25 to 28, K48, S51, S53, and 83 to 86 each bind NADP(+); these read YGSQ and DTIQ. H108 is a catalytic residue. G134 contacts NADP(+). Residues 183–331 enclose the KARI C-terminal knotted domain; that stretch reads SFREETETDL…KKLRSMMKWL (149 aa). Residues D191, E195, E227, and E231 each contribute to the Mg(2+) site. A substrate-binding site is contributed by S252.

The protein belongs to the ketol-acid reductoisomerase family. The cofactor is Mg(2+).

The catalysed reaction is (2R)-2,3-dihydroxy-3-methylbutanoate + NADP(+) = (2S)-2-acetolactate + NADPH + H(+). The enzyme catalyses (2R,3R)-2,3-dihydroxy-3-methylpentanoate + NADP(+) = (S)-2-ethyl-2-hydroxy-3-oxobutanoate + NADPH + H(+). The protein operates within amino-acid biosynthesis; L-isoleucine biosynthesis; L-isoleucine from 2-oxobutanoate: step 2/4. Its pathway is amino-acid biosynthesis; L-valine biosynthesis; L-valine from pyruvate: step 2/4. In terms of biological role, involved in the biosynthesis of branched-chain amino acids (BCAA). Catalyzes an alkyl-migration followed by a ketol-acid reduction of (S)-2-acetolactate (S2AL) to yield (R)-2,3-dihydroxy-isovalerate. In the isomerase reaction, S2AL is rearranged via a Mg-dependent methyl migration to produce 3-hydroxy-3-methyl-2-ketobutyrate (HMKB). In the reductase reaction, this 2-ketoacid undergoes a metal-dependent reduction by NADPH to yield (R)-2,3-dihydroxy-isovalerate. The chain is Ketol-acid reductoisomerase (NADP(+)) from Leptospira interrogans serogroup Icterohaemorrhagiae serovar copenhageni (strain Fiocruz L1-130).